A 108-amino-acid chain; its full sequence is Small ribosomal subunit protein eS25 (108 aa).

The segment at 1–36 (MAPKKAQAPPPSSKPAKSGGGKQKKKKWSKGKQKEK) is disordered. Residues 22 to 31 (KQKKKKWSKG) show a composition bias toward basic residues.

Belongs to the eukaryotic ribosomal protein eS25 family.

This chain is Small ribosomal subunit protein eS25 (RPS25), found in Solanum lycopersicum (Tomato).